Consider the following 51-residue polypeptide: ATP synthase F(1) complex subunit epsilon, mitochondrial (51 aa).

N6-acetyllysine; alternate occurs at positions 21, 32, and 37. 3 positions are modified to N6-succinyllysine; alternate: K21, K32, and K37. Residue K44 is modified to N6-acetyllysine.

This sequence belongs to the eukaryotic ATPase epsilon family. Component of the ATP synthase complex composed at least of ATP5F1A/subunit alpha, ATP5F1B/subunit beta, ATP5MC1/subunit c (homooctomer), MT-ATP6/subunit a, MT-ATP8/subunit 8, ATP5ME/subunit e, ATP5MF/subunit f, ATP5MG/subunit g, ATP5MK/subunit k, ATP5MJ/subunit j, ATP5F1C/subunit gamma, ATP5F1D/subunit delta, ATP5F1E/subunit epsilon, ATP5PF/subunit F6, ATP5PB/subunit b, ATP5PD/subunit d, ATP5PO/subunit OSCP. ATP synthase complex consists of a soluble F(1) head domain (subunits alpha(3) and beta(3)) - the catalytic core - and a membrane F(0) domain - the membrane proton channel (subunits c, a, 8, e, f, g, k and j). These two domains are linked by a central stalk (subunits gamma, delta, and epsilon) rotating inside the F1 region and a stationary peripheral stalk (subunits F6, b, d, and OSCP).

It localises to the mitochondrion. Its subcellular location is the mitochondrion inner membrane. Subunit epsilon, of the mitochondrial membrane ATP synthase complex (F(1)F(0) ATP synthase or Complex V) that produces ATP from ADP in the presence of a proton gradient across the membrane which is generated by electron transport complexes of the respiratory chain. ATP synthase complex consist of a soluble F(1) head domain - the catalytic core - and a membrane F(1) domain - the membrane proton channel. These two domains are linked by a central stalk rotating inside the F(1) region and a stationary peripheral stalk. During catalysis, ATP synthesis in the catalytic domain of F(1) is coupled via a rotary mechanism of the central stalk subunits to proton translocation. In vivo, can only synthesize ATP although its ATP hydrolase activity can be activated artificially in vitro. May be essential for the assembly of F(1) and may play an important role in the incorporation of the hydrophobic subunit c into the F(1)-c oligomer rotor of the mitochondrial ATP synthase complex. The sequence is that of ATP synthase F(1) complex subunit epsilon, mitochondrial from Rattus norvegicus (Rat).